Consider the following 448-residue polypeptide: Eukaryotic translation initiation factor 3 subunit E (448 aa).

Residues 254-423 (TDLFFSPAYI…GTVIMNHPPQ (170 aa)) enclose the PCI domain.

This sequence belongs to the eIF-3 subunit E family. Component of the eukaryotic translation initiation factor 3 (eIF-3) complex.

It localises to the cytoplasm. In terms of biological role, component of the eukaryotic translation initiation factor 3 (eIF-3) complex, which is involved in protein synthesis of a specialized repertoire of mRNAs and, together with other initiation factors, stimulates binding of mRNA and methionyl-tRNAi to the 40S ribosome. The eIF-3 complex specifically targets and initiates translation of a subset of mRNAs involved in cell proliferation. The chain is Eukaryotic translation initiation factor 3 subunit E (int6) from Emericella nidulans (strain FGSC A4 / ATCC 38163 / CBS 112.46 / NRRL 194 / M139) (Aspergillus nidulans).